The primary structure comprises 1215 residues: Endoplasmic reticulum transmembrane helix translocase (1215 aa).

Residues 1–27 lie on the Cytoplasmic side of the membrane; that stretch reads MTKKSFVSSPIVRDSTLLVPKSLIAKP. The helical transmembrane segment at 28-43 threads the bilayer; that stretch reads YVLPFFPLYATFAQLY. Topologically, residues 44 to 56 are lumenal; the sequence is FQQYDRYIKGPEW. The chain crosses the membrane as a helical span at residues 57-76; sequence TFVYLGTLVSLNILVMLMPA. Topologically, residues 77 to 188 are cytoplasmic; it reads WNVKIKAKFN…ENSFDIPIPT (112 aa). Positions 156–185 are A-domain; part 1; the sequence is KIGDFQKCKGHSGDLTHLKRLYGENSFDIP. A helical transmembrane segment spans residues 189 to 216; the sequence is FMELFKEHAVAPLFVFQVFCVALWLLDE. Position 217 (F217) is a topological domain, lumenal. Residues 218-246 traverse the membrane as a helical segment; that stretch reads WYYSLFNLFMIISMEAAAVFQRLTALKEF. The Cytoplasmic segment spans residues 247 to 395; sequence RTMGIKPYTI…IYSAERVSVD (149 aa). The A-domain; part 2 stretch occupies residues 250 to 390; that stretch reads GIKPYTINVF…LVRVMIYSAE (141 aa). A Phosphoserine modification is found at S324. A helical transmembrane segment spans residues 396 to 425; that stretch reads NKEALMFILFLLIFAVIASWYVWVEGTKMG. Topologically, residues 426–427 are lumenal; it reads RI. Transmembrane regions (helical) follow at residues 428-442 and 446-464; these read QSKL…ITSV and ELPM…ALAK. Over 465–971 the chain is Cytoplasmic; that stretch reads FYVYCTEPFR…APFTSKLANV (507 aa). Residues 466–495 form a P-domain; part 1 region; that stretch reads YVYCTEPFRIPFAGRIDVCCFDKTGTLTGE. D487 (4-aspartylphosphate intermediate) is an active-site residue. D487 and T489 together coordinate Mg(2+). ATP is bound by residues 487–489, F582, R634, D699, and 816–820; these read DKT and DGTND. An N-domain region spans residues 497 to 674; the sequence is LVFEGLAGIS…FNGFLIFHCP (178 aa). Positions 677–837 are P-domain; part 2; the sequence is DDAIETIKML…HVGIALLNGT (161 aa). Position 816 (D816) interacts with Mg(2+). Residues 838–953 are arm-like; the sequence is EEGLKKLGEQ…DAQGDEAPAL (116 aa). S936 is subject to Phosphoserine. The segment at 954-969 is P-domain; part 3; that stretch reads KLGDASCAAPFTSKLA. The helical transmembrane segment at 972–1011 threads the bilayer; that stretch reads SAVTNIIRQGRCALVNTIQMYKILALNCLISAYSLSIIYM. Residues 1012–1017 lie on the Lumenal side of the membrane; it reads AGVKFG. Residues 1018–1035 traverse the membrane as a helical segment; it reads DGQATVSGLLLSVCFLSI. Residues 1036 to 1055 lie on the Cytoplasmic side of the membrane; the sequence is SRGKPLEKLSKQRPQSGIFN. The chain crosses the membrane as a helical span at residues 1056–1084; that stretch reads VYIMGSILSQFAVHIATLVYITTEIYKLE. Residues 1085-1099 are Lumenal-facing; the sequence is PREPQVDLEKEFAPS. Residues 1100 to 1121 form a helical membrane-spanning segment; it reads LLNTGIFIIQLVQQVSTFAVNY. Residues 1122–1133 lie on the Cytoplasmic side of the membrane; the sequence is QGEPFRENIRSN. A helical membrane pass occupies residues 1134–1151; sequence KGMYYGLLGVTGLALASA. At 1152 to 1168 the chain is on the lumenal side; it reads TEFLPELNEAMKFVPMT. A helical membrane pass occupies residues 1169–1197; that stretch reads DDFKIKLTLTLLLDFFGSWGVEHFFKFFF. The Cytoplasmic segment spans residues 1198-1215; it reads MDDKPSDISVQQVKIASK.

This sequence belongs to the cation transport ATPase (P-type) (TC 3.A.3) family. Type V subfamily. Mg(2+) is required as a cofactor.

Its subcellular location is the endoplasmic reticulum membrane. It carries out the reaction [protein]-with a C-terminal TM segment(out) + ATP + H2O = [protein]-with a C-terminal TM segment(in) + ADP + phosphate + H(+). The ATPase activity is stimulated by phosphatidylinositol 4-phosphate (PI4P). Functionally, endoplasmic reticulum translocase required to remove mitochondrial transmembrane proteins mistargeted to the endoplasmic reticulum. Acts as a dislocase that mediates the ATP-dependent extraction of mislocalized mitochondrial transmembrane proteins from the endoplasmic reticulum membrane. Specifically binds mitochondrial tail-anchored transmembrane proteins: has an atypically large substrate-binding pocket that recognizes and binds moderately hydrophobic transmembranes with short hydrophilic lumenal domains. The protein is Endoplasmic reticulum transmembrane helix translocase of Saccharomyces cerevisiae (strain ATCC 204508 / S288c) (Baker's yeast).